The chain runs to 508 residues: Gasdermin-C (508 aa).

Residues 1 to 257 form a triggers pyroptosis region; sequence MPSMLERISK…VGYCAARSEG (257 aa).

This sequence belongs to the gasdermin family. As to quaternary structure, homooligomer; homooligomeric ring-shaped pore complex containing 27-28 subunits when inserted in the membrane. In terms of processing, cleavage by CASP8 relieves autoinhibition by releasing the N-terminal moiety (Gasdermin-C, N-terminal) that initiates pyroptosis. The cleavage site is unclear. According to a publication, it takes place after Asp-240 in response to alpha-ketoglutarate. Another paper reports cleavage by CASP8 after Asp-365. Post-translationally, palmitoylated. In terms of tissue distribution, expressed mainly in trachea and spleen. In the esophagus, expressed in differentiating cells and probably in differentiated cells. Also detected in gastric epithelium.

The protein localises to the cytoplasm. The protein resides in the cytosol. It is found in the cell membrane. The full-length protein before cleavage is inactive: intramolecular interactions between N- and C-terminal domains mediate autoinhibition in the absence of activation signal. The intrinsic pyroptosis-inducing activity is carried by the released N-terminal moiety (Gasdermin-C, N-terminal) following cleavage by caspase CASP8. In terms of biological role, this form constitutes the precursor of the pore-forming protein: upon cleavage, the released N-terminal moiety (Gasdermin-C, N-terminal) binds to membranes and forms pores, triggering pyroptosis. Functionally, pore-forming protein that causes membrane permeabilization and pyroptosis. Produced by the cleavage of gasdermin-C by caspase CASP8 in response to death signals. After cleavage, moves to the plasma membrane where it strongly binds to membrane inner leaflet lipids. Homooligomerizes within the membrane and forms pores of 10-15 nanometers (nm) of inner diameter, triggering pyroptosis. The chain is Gasdermin-C from Homo sapiens (Human).